We begin with the raw amino-acid sequence, 87 residues long: Small ribosomal subunit protein bS20 (87 aa).

The interval 1-24 (MANTAQARKRARQSVERNKHNSSL) is disordered.

It belongs to the bacterial ribosomal protein bS20 family.

Functionally, binds directly to 16S ribosomal RNA. This is Small ribosomal subunit protein bS20 from Bordetella avium (strain 197N).